The primary structure comprises 177 residues: Nucleoside triphosphate/diphosphate phosphatase (177 aa).

R23 serves as the catalytic Proton donor. N87, D103, D105, D107, D120, and E123 together coordinate Mg(2+).

This sequence belongs to the Ntdp family. It depends on Mg(2+) as a cofactor.

The catalysed reaction is a ribonucleoside 5'-triphosphate + H2O = a ribonucleoside 5'-diphosphate + phosphate + H(+). The enzyme catalyses a ribonucleoside 5'-diphosphate + H2O = a ribonucleoside 5'-phosphate + phosphate + H(+). In terms of biological role, has nucleoside phosphatase activity towards nucleoside triphosphates and nucleoside diphosphates. In Streptococcus pyogenes serotype M1, this protein is Nucleoside triphosphate/diphosphate phosphatase.